Reading from the N-terminus, the 550-residue chain is CTP synthase (550 aa).

The interval 1–266 (MNVNYIFVTG…DEYICKYFNL (266 aa)) is amidoligase domain. Ser14 is a binding site for CTP. Ser14 contacts UTP. ATP contacts are provided by residues 15–20 (SLGKGI) and Asp72. 2 residues coordinate Mg(2+): Asp72 and Glu140. CTP-binding positions include 147 to 149 (DIE), 187 to 192 (KTKPTQ), and Lys223. UTP contacts are provided by residues 187–192 (KTKPTQ) and Lys223. Residues 291–546 (TIGIVGKYIR…INAAIQYQCK (256 aa)) enclose the Glutamine amidotransferase type-1 domain. Gly353 contributes to the L-glutamine binding site. The active-site Nucleophile; for glutamine hydrolysis is Cys380. L-glutamine contacts are provided by residues 381-384 (LGMQ), Glu404, and Arg474. Active-site residues include His519 and Glu521.

Belongs to the CTP synthase family. Homotetramer.

The catalysed reaction is UTP + L-glutamine + ATP + H2O = CTP + L-glutamate + ADP + phosphate + 2 H(+). The enzyme catalyses L-glutamine + H2O = L-glutamate + NH4(+). It catalyses the reaction UTP + NH4(+) + ATP = CTP + ADP + phosphate + 2 H(+). It participates in pyrimidine metabolism; CTP biosynthesis via de novo pathway; CTP from UDP: step 2/2. Its activity is regulated as follows. Allosterically activated by GTP, when glutamine is the substrate; GTP has no effect on the reaction when ammonia is the substrate. The allosteric effector GTP functions by stabilizing the protein conformation that binds the tetrahedral intermediate(s) formed during glutamine hydrolysis. Inhibited by the product CTP, via allosteric rather than competitive inhibition. In terms of biological role, catalyzes the ATP-dependent amination of UTP to CTP with either L-glutamine or ammonia as the source of nitrogen. Regulates intracellular CTP levels through interactions with the four ribonucleotide triphosphates. In Blochmanniella floridana, this protein is CTP synthase.